Here is a 293-residue protein sequence, read N- to C-terminus: F-box only protein 6 (293 aa).

One can recognise an F-box domain in the interval 10–57; that stretch reads LDSINELPENILLELFTHVPARQLLLNCRLVCSLWRDLIDLMTLWKRK. The 182-residue stretch at 78–259 folds into the FBA domain; the sequence is FYFLRSLHRN…VTNSSIVVSP (182 aa). S258 is subject to Phosphoserine. Residues 261 to 271 are compositionally biased toward polar residues; sequence MTRNQASSEAQ. The segment at 261 to 285 is disordered; it reads MTRNQASSEAQPGQKHGQEEAAQSP. A Phosphoserine modification is found at S284.

As to quaternary structure, interacts with VCP. Part of a SCF (SKP1-cullin-F-box) protein ligase complex. Interacts with CHEK1 and CUL1.

It is found in the cytoplasm. It participates in protein modification; protein ubiquitination. In terms of biological role, substrate-recognition component of some SCF (SKP1-CUL1-F-box protein)-type E3 ubiquitin ligase complexes. Involved in endoplasmic reticulum-associated degradation pathway (ERAD) for misfolded lumenal proteins by recognizing and binding sugar chains on unfolded glycoproteins that are retrotranslocated into the cytosol and promoting their ubiquitination and subsequent degradation. Able to recognize and bind denatured glycoproteins, which are modified with not only high-mannose but also complex-type oligosaccharides. Also recognizes sulfated glycans. Also involved in DNA damage response by specifically recognizing activated CHEK1 (phosphorylated on 'Ser-345'), promoting its ubiquitination and degradation. Ubiquitination of CHEK1 is required to ensure that activated CHEK1 does not accumulate as cells progress through S phase, or when replication forks encounter transient impediments during normal DNA replication. The chain is F-box only protein 6 (FBXO6) from Homo sapiens (Human).